Here is a 374-residue protein sequence, read N- to C-terminus: MKGSEEAYLVSDKATKMYSLTKDSEKNHPSKPPLQDEENPQSKYHCHNNNKKAYDARQREQTFAKKKLCIASLICFVFISAEIVGGYIAGSLAVVTDAAHLLVDLSSFFISLCSLWLSSKSSTTRLTFGWHRAEILGALMSVITIWLVTGVLVYLACERLIRPDYTIDGTVMLITSACALGANLVLALILHQSGHGHSHAGGKHEHMASEYKPQTNASIRAAFIHVIGDLFQSISVLISALIIYFKPEYKMADPICTFIFSIFVLITTVTVLRDLLTVLMEGTPRGIHYSDVKQSILAVDGVKSVHSLHLWALTMNQVILSAHIATDIVGESKRILKDVTQNVFARFPFHSVTIQVEPIEDQSPECMFCYEPTQ.

Over 1–67 (MKGSEEAYLV…QREQTFAKKK (67 aa)) the chain is Cytoplasmic. The interval 18–48 (YSLTKDSEKNHPSKPPLQDEENPQSKYHCHN) is disordered. Residues His-45, Cys-46, and His-47 each coordinate Zn(2+). An HCH Motif; seals regulatory zinc-binding pocket motif is present at residues 45 to 47 (HCH). The chain crosses the membrane as a helical span at residues 68 to 88 (LCIASLICFVFISAEIVGGYI). At 89–91 (AGS) the chain is on the lumenal, vesicle side. The helical transmembrane segment at 92 to 112 (LAVVTDAAHLLVDLSSFFISL) threads the bilayer. Residues His-100, Asp-104, and His-131 each contribute to the Zn(2+) site. Over 113–134 (CSLWLSSKSSTTRLTFGWHRAE) the chain is Cytoplasmic. Residues 135–155 (ILGALMSVITIWLVTGVLVYL) traverse the membrane as a helical segment. The Lumenal, vesicle portion of the chain corresponds to 156-169 (ACERLIRPDYTIDG). A helical membrane pass occupies residues 170–190 (TVMLITSACALGANLVLALIL). At 191–222 (HQSGHGHSHAGGKHEHMASEYKPQTNASIRAA) the chain is on the cytoplasmic side. A helical transmembrane segment spans residues 223–243 (FIHVIGDLFQSISVLISALII). Residues His-225 and Asp-229 each contribute to the Zn(2+) site. At 244–251 (YFKPEYKM) the chain is on the lumenal, vesicle side. A helical membrane pass occupies residues 252–272 (ADPICTFIFSIFVLITTVTVL). Topologically, residues 273–374 (RDLLTVLMEG…ECMFCYEPTQ (102 aa)) are cytoplasmic. Positions 306, 323, 350, 357, 366, and 369 each coordinate Zn(2+).

The protein belongs to the cation diffusion facilitator (CDF) transporter (TC 2.A.4) family. SLC30A subfamily. Homodimer.

It is found in the cytoplasmic vesicle. Its subcellular location is the secretory vesicle membrane. The protein resides in the cell membrane. The enzyme catalyses Zn(2+)(in) + 2 H(+)(out) = Zn(2+)(out) + 2 H(+)(in). In terms of biological role, proton-coupled zinc ion antiporter mediating the entry of zinc into the lumen of pancreatic beta cell secretory granules, thereby regulating insulin secretion. The sequence is that of Proton-coupled zinc antiporter SLC30A8 (slc30a8) from Xenopus tropicalis (Western clawed frog).